Here is a 328-residue protein sequence, read N- to C-terminus: Gonadotropin-releasing hormone receptor (328 aa).

Topologically, residues 1–38 (MANSASPEQNQNHCSASNSSIPLTQANLPTLTLSGKIR) are extracellular. An N-linked (GlcNAc...) asparagine glycan is attached at Asn-18. The helical transmembrane segment at 39–59 (VTVTFFLFLLSTTFNASFLLK) threads the bilayer. Residues 60–84 (LHKWTQKKENGKKLSKMKVLLKHLT) are Cytoplasmic-facing. The chain crosses the membrane as a helical span at residues 85 to 105 (LANLLETLIVMPLDGMWNITV). The Extracellular segment spans residues 106 to 115 (QWYAGELLCK). Residues Cys-114 and Cys-196 are joined by a disulfide bond. A helical membrane pass occupies residues 116 to 136 (VLSYLKLFSMYAPAFMMVVIS). Residues 137–157 (LDRSLAITRPLAVKSNSKLGR) lie on the Cytoplasmic side of the membrane. A helical transmembrane segment spans residues 158 to 178 (SMIGLAWLLSSIFAGPQLYIF). The Extracellular portion of the chain corresponds to 179–208 (RMIHLADSSGQTEGFSQCVTHCSFPQWWHQ). The helical transmembrane segment at 209–229 (AFYNFFTFSCLFIIPLLFMLI) threads the bilayer. Residues 230 to 271 (CNAKIIFTLTRVLHQDPHKLQLNQSKNNIPRARLRTLKMTVA) are Cytoplasmic-facing. Residues 272-292 (FATSFTVCWTPYYVLGIWYWF) form a helical membrane-spanning segment. The Extracellular portion of the chain corresponds to 293 to 306 (DPEMLNRVSDPVNH). A helical membrane pass occupies residues 307–327 (FFFLFALLNPCFDPLIYGYFS). Position 328 (Leu-328) is a topological domain, cytoplasmic.

The protein belongs to the G-protein coupled receptor 1 family.

Its subcellular location is the cell membrane. In terms of biological role, receptor for gonadotropin releasing hormone (GnRH) that mediates the action of GnRH to stimulate the secretion of the gonadotropic hormones luteinizing hormone (LH) and follicle-stimulating hormone (FSH). This receptor mediates its action by association with G-proteins that activate a phosphatidylinositol-calcium second messenger system. The protein is Gonadotropin-releasing hormone receptor (GNRHR) of Equus caballus (Horse).